A 564-amino-acid polypeptide reads, in one-letter code: MSDEIARRIAQGAGRAPADLVIRDARLLDLVTGDLVDTDIAVCGDGIVGTYGEYAGTRVIEAEGRVAVPGFIDTHLHVESSLITPHEFDRCVLPHGVTTAIWDPHELANVLGTAAFDYALQAARETVMDIRVQLSSCVPATDLESSGARIEAEALRPYRDHPGSLGLAEFMNFPGIVAGDPACLAKLALFAGRHVDGHAPLLSGRDLNAYVAAGIRTDHETTGPAEALEKIRKGMTVLIREGSVSKDLRALAPLLTVATSPFLAFCTDDRNPLDIAEEGHLDALIRMAIGLGVAPLAAYRAASLSAATAFGLADRGMIAPGRRADIVLLDDVETCAVARVIAGGRPAEEALAAPRTRTPAPGRGSVKAAPVAPEAFRVAAAPGETSVIGVVPGRIITEHRRLTLPARDGAALCDLAQDAVKVAVIARHGAPGMACGFVQGFGLRRGAIASSVGHDSHNLCVVGADEADMALAVNRLIALQGGFVVAEGGAVRAELALPIAGLMSDLPFEAVRDALHPLREAARGLGCTLPEPFLQVAFLPLPMIPHLKITDRGLVDVDRMRILP.

It belongs to the metallo-dependent hydrolases superfamily. Adenine deaminase family. Mn(2+) is required as a cofactor.

The catalysed reaction is adenine + H2O + H(+) = hypoxanthine + NH4(+). This chain is Adenine deaminase, found in Methylobacterium sp. (strain 4-46).